The chain runs to 1125 residues: Transient receptor potential cation channel subfamily A member 1 (1125 aa).

At 1 to 721 (MKRSLRRVLR…KWCAYGFRAH (721 aa)) the chain is on the cytoplasmic side. ANK repeat units follow at residues 63–94 (ENLCLLHHAAAEGQVELMQLIINGSSCEALNV), 98–127 (YGNTPLHWAAEKNQVESVKFLLSQGANPNL), 131–161 (NMMAPLHIAVQGMYNEVIKVLTEHKATNINL), 165–194 (NGNTALMSTCAKDNSEALQILLEKGAKLCK), 198–227 (WGDYPVHQAAFSGAKRCMELILAYGEKTGY), 239–268 (KKASPLHLAVQSGDLDMIKMCLDSGAHIDM), 272–301 (AKCMALHFAATQGATDIVKLMISSYTGSSD), 309–338 (NQETLLHRASLFDHHDLADYLISVGADINS), and 342–371 (EGRSPLILATASASWNIVNLLLSKGAKVDI). 5 disulfides stabilise this stretch: cysteine 193–cysteine 666, cysteine 463–cysteine 666, cysteine 609–cysteine 622, cysteine 622–cysteine 666, and cysteine 634–cysteine 859. Residue proline 395 is modified to 4-hydroxyproline; transient. ANK repeat units lie at residues 413–442 (DGCTPLHYACRQGAPVSVNNLLRFNVSVHS), 446–475 (DKKSPLHFAASYGRINTCQRLLQDISDTRL), 482–511 (HGMTPLHLAAKNGHDKVVQLLLKKGALFLS), 514–543 (NGWTALHHASMGGYTQTMKVILDTNLKCTD), and 548–577 (EGNTALHFAAREGHAKAVAMLLSYNADILL). (E)-cinnamaldehyde is bound by residues cysteine 415 and cysteine 422. A (E)-cinnamaldehyde-binding site is contributed by cysteine 622. Cysteine 634 bears the Cysteine sulfenic acid (-SOH); transient; in hyperoxia mark. The (E)-cinnamaldehyde site is built by cysteine 642, cysteine 666, and lysine 712. A helical membrane pass occupies residues 722 to 742 (MMNLGSYCLGLIPMTLLVVKI). At 743-767 (QPGMAFNSTGIINETISTHEERINT) the chain is on the extracellular side. Asparagine 749 and asparagine 755 each carry an N-linked (GlcNAc...) asparagine glycan. A helical transmembrane segment spans residues 768 to 788 (LNSFPLKICMILVFLSSIFGY). Residues 789–806 (CKEVVQIFQQKRNYFLDY) are Cytoplasmic-facing. Positions 791, 794, 808, and 811 each coordinate Ca(2+). Residues 807-827 (NNALEWVIYTTSMIFVLPLFL) form a helical membrane-spanning segment. The Extracellular segment spans residues 828–832 (DIPAY). The chain crosses the membrane as a helical span at residues 833–853 (MQWQCGAIAIFFYWMNFLLYL). Residues 854–876 (QRFENCGIFIVMLEVIFKTLLRS) are Cytoplasmic-facing. Residue cysteine 859 is modified to Cysteine sulfenic acid (-SOH); transient; in hyperoxia. Residues 877–897 (TGVFIFLLLAFGLSFYVLLNF) form a helical membrane-spanning segment. At 898 to 904 (QDAFSTP) the chain is on the extracellular side. An intramembrane region (pore-forming) is located at residues 905-925 (LLSLIQTFSMMLGDINYRDAF). Residues 926-937 (LEPLFRNELAYP) are Extracellular-facing. Residues 938–959 (VLTFGQLIAFTMFVPIVLMNLL) traverse the membrane as a helical segment. The Cytoplasmic portion of the chain corresponds to 960 to 1125 (IGLAVGDIAE…THCSISHPDI (166 aa)). Residues 1044 to 1073 (MEILKQKYRLKDLTSLLEKQHELIKLIIQK) adopt a coiled-coil conformation. 1048 to 1054 (KQKYRLK) contributes to the a 1,2-diacyl-sn-glycero-3-phospho-(1D-myo-inositol) binding site.

This sequence belongs to the transient receptor (TC 1.A.4) family. Homotetramer. Interacts with TMEM100. Interacts with EGLN1. Interacts with the scorpion wasabi receptor toxin at the same site that electrophiles but in a non-covalent manner. Post-translationally, TRPA1 activation by electrophiles occurs though covalent modification of specific cysteine residues in the N-terminal cytoplasmic domain. In terms of processing, hydroxylation is required for TRPA1 activity inhibition in normoxia. In hypoxia, the decrease in oxygen concentration diminishes the activity of the hydroxylase EGLN1, thus relieving TRPA1 from inhibition and ultimately leading to channel activation. Oxidation of Cys-634 and Cys-859 in hyperoxia may override the hydroxylase EGLN1-mediated inhibition, causing TRPA1 activation. Specifically expressed in a subset of nociceptive neurons. Expressed in dorsal root ganglia.

It is found in the cell membrane. The catalysed reaction is Ca(2+)(in) = Ca(2+)(out). It catalyses the reaction Mg(2+)(in) = Mg(2+)(out). It carries out the reaction Na(+)(in) = Na(+)(out). The enzyme catalyses K(+)(in) = K(+)(out). The catalysed reaction is Zn(2+)(in) = Zn(2+)(out). Electrophilic ligands activate the channel by covalent modification of intracellular cysteines; Cys-622 plays a key role in covalent binding of electrophiles. Extracellular Ca(2+) both potentiates and inactivates TRPA1; a rapid potentiation follows by slow desensitization. Activated by increase in intracellular Ca(2+) concentration. Inhibited by ruthenium red, a potent blocker of TRPV channels and selectively by A-967079. Activated by benzyl isothiocyanate (BITC), iodoacetamide, sulfhydryl reactive agent MTSEA, N-methyl maleimide (NMM), N-ethylmaleimide (NEM), and 2-aminoethyldiphenylborinate (2-APB). Also activated by hyperoxia. Acivated by intracellular Zn(2+). TRPA1 activation may critically depend on the presence of small intracellular compounds such as polyphosphates. In terms of biological role, ligand-activated Ca(2+)-permeable, nonselective cation channel. Involved in pain detection and possibly also in cold perception, oxygen concentration perception, cough, itch, and inner ear function. Has a relatively high Ca(2+) selectivity, with a preference for divalent over monovalent cations (Ca(2+) &gt; Ba(2+) &gt; Mg(2+) &gt; NH4(+) &gt; Li(+) &gt; K(+)), the influx of cation into the cytoplasm, leads to membrane depolarization. Has a central role in the pain response to endogenous inflammatory mediators, such as bradykinin and to a diverse array of irritants. Activated by a large variety of structurally unrelated electrophilic and non-electrophilic chemical compounds, such as allylthiocyanate (AITC) from mustard oil or wasabi, cinnamaldehyde, diallyl disulfide (DADS) from garlic, and acrolein, an environmental irritant. Electrophilic ligands activate TRPA1 by interacting with critical N-terminal Cys residues in a covalent manner. Non-electrophile agonists bind at distinct sites in the transmembrane domain to promote channel activation. Also acts as an ionotropic cannabinoid receptor by being activated by delta(9)-tetrahydrocannabinol (THC), the psychoactive component of marijuana. May be a component for the mechanosensitive transduction channel of hair cells in inner ear, thereby participating in the perception of sounds. The polypeptide is Transient receptor potential cation channel subfamily A member 1 (Rattus norvegicus (Rat)).